We begin with the raw amino-acid sequence, 260 residues long: HTH-type transcriptional repressor NanR (260 aa).

An HTH gntR-type domain is found at 27-95 (KKLSEMVEEE…NGERARVSRP (69 aa)). Positions 55–74 (ERELMAFFNVGRPSVREALA) form a DNA-binding region, H-T-H motif.

The protein belongs to the NanR family.

Its function is as follows. Transcriptional repressor that controls expression of the genes required for the catabolism of sialic acids. In Citrobacter rodentium (strain ICC168) (Citrobacter freundii biotype 4280), this protein is HTH-type transcriptional repressor NanR.